The following is a 198-amino-acid chain: Cerebellin-4 (198 aa).

The signal sequence occupies residues 1 to 24 (MGSARRALSVVPAVLLILVLPVWA). Residues Asn26 and Asn85 are each glycosylated (N-linked (GlcNAc...) asparagine). One can recognise a C1q domain in the interval 63-198 (AANSKVAFSA…TFSGFLVFPL (136 aa)).

As to quaternary structure, homohexamer; disulfide-linked homotrimers. The trimers are assembled via the globular C1q domains. The trimers associate via N-terminal cysteine residues to form disulfide-linked hexamers. May form oligomers with CBLN1, CBLN2 and CBLN3 prior to secretion. Once secreted, does not interact with other CBLN family members. Strongly interacts with DCC in a NTN1-displaceable fashion. Weakly binds to NRXN1 and NRXN2 long and short isoforms produced by alternative promoter usage. Interaction with NRXN3 short isoform is hardly detectable; no interaction at all with NRXN3 long isoform. Does not interact with NEO1, GRID1 and GRID2. In terms of processing, sialoglycoprotein. As to expression, expressed in brain with high levels in particular thalamic nuclei. In the thalamus, predominantly expressed in neurons within the parafascicular nucleus. Found in the hippocampus, mostly in the dendrites and somata of pyramidal neurons (at protein level). Very low or no expression in most other brain regions. Highly expressed in the ventral medial habenula.

The protein localises to the secreted. The protein resides in the synapse. Its function is as follows. Acts as a synaptic organizer in specific subsets of neurons in the brain. Essential for the formation and maintenance of inhibitory GABAergic synapses. Promotes the development of dendrite-targeting inhibitory GABAergic synapses made by somatostatin-positive interneurons. May contribute to the function of ventral medial habenula region of the brain implicated in the regulation of anxiety-related behaviors. May play a role in CBLN3 export from the endoplasmic reticulum and secretion. This chain is Cerebellin-4 (Cbln4), found in Mus musculus (Mouse).